A 1755-amino-acid polypeptide reads, in one-letter code: MESQQLSNYPHISHGSACASVTSKEVHTNQDPLDVSASKIQEYDKASTKANSQQTTTPASSAVPENPHHASPQPASVPPPQNGPYPQQCMMTQNQANPSGWSFYGHPSMIPYTPYQMSPMYFPPGPQSQFPQYPSSVGTPLSTPSPESGNTFTDSSSADSDMTSTKKYVRPPPMLTSPNDFPNWVKTYIKFLQNSNLGGIIPTVNGKPVRQITDDELTFLYNTFQIFAPSQFLPTWVKDILSVDYTDIMKILSKSIEKMQSDTQEANDIVTLANLQYNGSTPADAFETKVTNIIDRLNNNGIHINNKVACQLIMRGLSGEYKFLRYTRHRHLNMTVAELFLDIHAIYEEQQGSRNSKPNYRRNPSDEKNDSRSYTNTTKPKVIARNPQKTNNSKSKTARAHNVSTSNNSPSTDNDSISKSTTEPIQLNNKHDLHLGQKLTESTVNHTNHSDDELPGHLLLDSGASRTLIRSAHHIHSASSNPDINVVDAQKRNIPINAIGDLQFHFQDNTKTSIKVLHTPNIAYDLLSLNELAAVDITACFTKNVLERSDGTVLAPIVKYGDFYWVSKKYLLPSNISVPTINNVHTSESTRKYPYPFIHRMLAHANAQTIRYSLKNNTITYFNESDVDWSSAIDYQCPDCLIGKSTKHRHIKGSRLKYQNSYEPFQYLHTDIFGPVHNLPKSAPSYFISFTDETTKFRWVYPLHDRREDSILDVFTTILAFIKNQFQASVLVIQMDRGSEYTNRTLHKFLEKNGITPCYTTTADSRAHGVAERLNRTLLDDCRTQLQCSGLPNHLWFSAIEFSTIVRNSLASPKSKKSARQHAGLAGLDISTLLPFGQPVIVNDHNPNSKIHPRGIPGYALHPSRNSYGYIIYLPSLKKTVDTTNYVILQGKESRLDQFNYDALTFDEDLNRLTASYQSFIASNEIQQSDDLNIESDHDFQSDIELHPEQPRNVLSKAVSPTDSTPPSTHTEDSKRVSKTNIRAPREVDPNISESNILPSKKRSSTPQISNIESTGSGGMHKLNVPLLAPMSQSNTHESSHASKSKDFRHSDSYSENETNHTNVPISSTGGTNNKTVPQISDQETEKRIIHRSPSIDASPPENNSSHNIVPIKTPTTVSEQNTEESIIADLPLPDLPPESPTEFPDPFKELPPINSRQTNSSLGGIGDSNAYTTINSKKRSLEDNETEIKVSRDTWNTKNMRSLEPPRSKKRIHLIAAVKAVKSIKPIRTTLRYDEAITYNKDIKEKEKYIQAYHKEVNQLLKMKTWDTDRYYDRKEIDPKRVINSMFIFNRKRDGTHKARFVARGDIQHPDTYDPGMQSNTVHHYALMTSLSLALDNNYYITQLDISSAYLYADIKEELYIRPPPHLGMNDKLIRLKKSLYGLKQSGANWYETIKSYLIKQCGMEEVRGWSCVFKNSQVTICLFVDDMILFSKDLNANKKIITTLKKQYDTKIINLGESDNEIQYDILGLEIKYQRGKYMKLGMENSLTEKIPKLNVPLNPKGRKLSAPGQPGLYIDQQELELEEDDYKMKVHEMQKLIGLASYVGYKFRFDLLYYINTLAQHILFPSKQVLDMTYELIQFIWNTRDKQLIWHKSKPVKPTNKLVVISDASYGNQPYYKSQIGNIYLLNGKVIGGKSTKASLTCTSTTEAEIHAISESVPLLNNLSHLVQELNKKPITKGLLTDSKSTISIIISNNEEKFRNRFFGTKAMRLRDEVSGNHLHVCYIETKKNIADVMTKPLPIKTFKLLTNKWIH.

Polar residues-rich tracts occupy residues 1–10 (MESQQLSNYP), 48–60 (TKAN…TPAS), and 127–152 (QSQF…GNTF). Disordered regions lie at residues 1–93 (MESQ…MMTQ), 126–173 (PQSQ…RPPP), and 352–421 (GSRN…SKST). A compositionally biased stretch (low complexity) spans 153 to 165 (TDSSSADSDMTST). The segment at 299–401 (NNGIHINNKV…NSKSKTARAH (103 aa)) is RNA-binding. Residues 402–418 (NVSTSNNSPSTDNDSIS) show a composition bias toward low complexity. Ser-416 is modified (phosphoserine). Asp-461 functions as the For protease activity; shared with dimeric partner in the catalytic mechanism. Residues 583–640 (NVHTSESTRKYPYPFIHRMLAHANAQTIRYSLKNNTITYFNESDVDWSSAIDYQCPDC) are integrase-type zinc finger-like. Positions 660 to 835 (NSYEPFQYLH…AGLDISTLLP (176 aa)) constitute an Integrase catalytic domain. Positions 671 and 736 each coordinate Mg(2+). Disordered stretches follow at residues 956–1087 (SKAV…ETEK), 1092–1111 (RSPS…NIVP), and 1130–1186 (DLPL…EDNE). Low complexity predominate over residues 960–969 (SPTDSTPPST). A compositionally biased stretch (polar residues) spans 1005–1015 (STPQISNIEST). Basic and acidic residues predominate over residues 1038 to 1053 (ESSHASKSKDFRHSDS). 2 stretches are compositionally biased toward polar residues: residues 1054-1082 (YSEN…QISD) and 1101-1111 (PENNSSHNIVP). The Bipartite nuclear localization signal signature appears at 1178-1212 (KKRSLEDNETEIKVSRDTWNTKNMRSLEPPRSKKR). The Reverse transcriptase Ty1/copia-type domain occupies 1338 to 1476 (NNYYITQLDI…DILGLEIKYQ (139 aa)). Mg(2+) contacts are provided by Asp-1346, Asp-1427, Asp-1428, Asp-1610, Glu-1652, and Asp-1685. The RNase H Ty1/copia-type domain occupies 1610 to 1752 (DASYGNQPYY…IKTFKLLTNK (143 aa)).

The capsid protein forms a homotrimer, from which the VLPs are assembled. The protease is a homodimer, whose active site consists of two apposed aspartic acid residues. In terms of processing, initially, virus-like particles (VLPs) are composed of the structural unprocessed proteins Gag and Gag-Pol, and also contain the host initiator methionine tRNA (tRNA(i)-Met) which serves as a primer for minus-strand DNA synthesis, and a dimer of genomic Ty RNA. Processing of the polyproteins occurs within the particle and proceeds by an ordered pathway, called maturation. First, the protease (PR) is released by autocatalytic cleavage of the Gag-Pol polyprotein yielding capsid protein p45 and a Pol-p154 precursor protein. This cleavage is a prerequisite for subsequent processing of Pol-p154 at the remaining sites to release the mature structural and catalytic proteins. Maturation takes place prior to the RT reaction and is required to produce transposition-competent VLPs.

The protein localises to the cytoplasm. It is found in the nucleus. The catalysed reaction is DNA(n) + a 2'-deoxyribonucleoside 5'-triphosphate = DNA(n+1) + diphosphate. It catalyses the reaction Endonucleolytic cleavage to 5'-phosphomonoester.. Capsid protein (CA) is the structural component of the virus-like particle (VLP), forming the shell that encapsulates the retrotransposons dimeric RNA genome. The particles are assembled from trimer-clustered units and there are holes in the capsid shells that allow for the diffusion of macromolecules. CA also has nucleocapsid-like chaperone activity, promoting primer tRNA(i)-Met annealing to the multipartite primer-binding site (PBS), dimerization of Ty1 RNA and initiation of reverse transcription. Functionally, the aspartyl protease (PR) mediates the proteolytic cleavages of the Gag and Gag-Pol polyproteins after assembly of the VLP. In terms of biological role, reverse transcriptase/ribonuclease H (RT) is a multifunctional enzyme that catalyzes the conversion of the retro-elements RNA genome into dsDNA within the VLP. The enzyme displays a DNA polymerase activity that can copy either DNA or RNA templates, and a ribonuclease H (RNase H) activity that cleaves the RNA strand of RNA-DNA heteroduplexes during plus-strand synthesis and hydrolyzes RNA primers. The conversion leads to a linear dsDNA copy of the retrotransposon that includes long terminal repeats (LTRs) at both ends. Its function is as follows. Integrase (IN) targets the VLP to the nucleus, where a subparticle preintegration complex (PIC) containing at least integrase and the newly synthesized dsDNA copy of the retrotransposon must transit the nuclear membrane. Once in the nucleus, integrase performs the integration of the dsDNA into the host genome. The protein is Transposon Ty1-MR2 Gag-Pol polyprotein (TY1B-MR2) of Saccharomyces cerevisiae (strain ATCC 204508 / S288c) (Baker's yeast).